The primary structure comprises 158 residues: MTELTHINQNGEANMVDVSGKQDTVREARAEAFIGMNAETLQMIMSGNHHKGDVFATARIAGIQAAKRTWELIPLCHPLLLSKVEVNLTALPESNQVRIESLCKLTGKTGVEMEALTAASVAALTIYDMCKAVQKDMVISQVRLLEKCGGKSGHFVAA.

Substrate is bound by residues 75-77 and 113-114; these read LCH and ME. Residue Asp-128 is part of the active site.

It belongs to the MoaC family. In terms of assembly, homohexamer; trimer of dimers.

It carries out the reaction (8S)-3',8-cyclo-7,8-dihydroguanosine 5'-triphosphate = cyclic pyranopterin phosphate + diphosphate. It participates in cofactor biosynthesis; molybdopterin biosynthesis. Catalyzes the conversion of (8S)-3',8-cyclo-7,8-dihydroguanosine 5'-triphosphate to cyclic pyranopterin monophosphate (cPMP). The chain is Cyclic pyranopterin monophosphate synthase from Actinobacillus succinogenes (strain ATCC 55618 / DSM 22257 / CCUG 43843 / 130Z).